Consider the following 453-residue polypeptide: MDWKEVLRRRLATPNTCPNKKKSEQELKDEEMDLFTKYYSEWKGGRKNTNEFYKTIPRFYYRLPAEDEVLLQKLREESRAVFLQRKSRELLDNEELQNLWFLLDKHQTPPMIGEEAMINYENFLKVGEKAGAKCKQFFTAKVFAKLLHTDSYGRISIMQFFNYVMRKVWLHQTRIGLSLYDVAGQGYLRESDLENYILELIPTLPQLDGLEKSFYSFYVCTAVRKFFFFLDPLRTGKIKIQDILACSFLDDLLELRDEELSKESQETNWFSAPSALRVYGQYLNLDKDHNGMLSKEELSRYGTATMTNVFLDRVFQECLTYDGEMDYKTYLDFVLALENRKEPAALQYIFKLLDIENKGYLNVFSLNYFFRAIQELMKIHGQDPVSFQDVKDEIFDMVKPKDPLKISLQDLINSNQGDTVTTILIDLNGFWTYENREALVANDSENSADLDDT.

2 consecutive EF-hand domains span residues 273–308 (PSAL…TMTN) and 341–376 (KEPA…IQEL). Positions 286, 288, 290, 292, and 297 each coordinate Ca(2+).

Interacts with MCM3AP/GANP. Interacts with PPP5C, and the phosphatase 2A core enzyme composed of the PPP2CA catalytic subunit and the constant regulatory subunit PPP2R1A. Finds in a complex with ABCB1, TFPI2 and PPP2R3C; leading to the dephosphorylation of ABCB1. Ubiquitously expressed in brain and other tissues.

Its subcellular location is the nucleus. It is found in the cytoplasm. In terms of biological role, may regulate MCM3AP phosphorylation through phosphatase recruitment. May act as a negative regulator of ABCB1 expression and function through the dephosphorylation of ABCB1 by TFPI2/PPP2R3C complex. May play a role in the activation-induced cell death of B-cells. In Homo sapiens (Human), this protein is Serine/threonine-protein phosphatase 2A regulatory subunit B'' subunit gamma (PPP2R3C).